The chain runs to 327 residues: GMP reductase (327 aa).

Catalysis depends on Cys-176, which acts as the Thioimidate intermediate. 205–228 (IIADGGIRTHGDIAKSIRFGASMV) provides a ligand contact to NADP(+).

Belongs to the IMPDH/GMPR family. GuaC type 2 subfamily.

It catalyses the reaction IMP + NH4(+) + NADP(+) = GMP + NADPH + 2 H(+). Its function is as follows. Catalyzes the irreversible NADPH-dependent deamination of GMP to IMP. It functions in the conversion of nucleobase, nucleoside and nucleotide derivatives of G to A nucleotides, and in maintaining the intracellular balance of A and G nucleotides. The chain is GMP reductase from Streptococcus pyogenes serotype M6 (strain ATCC BAA-946 / MGAS10394).